The primary structure comprises 165 residues: Peptide methionine sulfoxide reductase MsrA (165 aa).

C10 is a catalytic residue.

This sequence belongs to the MsrA Met sulfoxide reductase family.

It carries out the reaction L-methionyl-[protein] + [thioredoxin]-disulfide + H2O = L-methionyl-(S)-S-oxide-[protein] + [thioredoxin]-dithiol. The enzyme catalyses [thioredoxin]-disulfide + L-methionine + H2O = L-methionine (S)-S-oxide + [thioredoxin]-dithiol. Functionally, has an important function as a repair enzyme for proteins that have been inactivated by oxidation. Catalyzes the reversible oxidation-reduction of methionine sulfoxide in proteins to methionine. The protein is Peptide methionine sulfoxide reductase MsrA of Campylobacter jejuni subsp. jejuni serotype O:6 (strain 81116 / NCTC 11828).